The sequence spans 174 residues: Co-chaperone protein HscB homolog (174 aa).

Positions 2-74 (NYFELFKFSP…IRRAEHMLSL (73 aa)) constitute a J domain.

Belongs to the HscB family. As to quaternary structure, interacts with HscA and stimulates its ATPase activity.

Its function is as follows. Co-chaperone involved in the maturation of iron-sulfur cluster-containing proteins. Seems to help targeting proteins to be folded toward HscA. The sequence is that of Co-chaperone protein HscB homolog from Shewanella sp. (strain MR-4).